A 693-amino-acid chain; its full sequence is C6 finger domain transcription factor nscR (693 aa).

Positions 17–43 (CELCRERKVKCDKLDPCTNCSSAGVIC) form a DNA-binding region, zn(2)-C6 fungal-type. Positions 589 to 608 (AANTLSVPHTPPSRSSITSS) are disordered.

Its subcellular location is the nucleus. Functionally, transcription factor that specifically regulates the neosartoricin B biosynthesis gene cluster. The polypeptide is C6 finger domain transcription factor nscR (Trichophyton rubrum (strain ATCC MYA-4607 / CBS 118892) (Athlete's foot fungus)).